Here is a 90-residue protein sequence, read N- to C-terminus: RNA-binding protein Hfq (90 aa).

A Sm domain is found at 11 to 71 (DVFLNSVRKT…ISTIMPAAPV (61 aa)).

This sequence belongs to the Hfq family. As to quaternary structure, homohexamer.

Its function is as follows. RNA chaperone that binds small regulatory RNA (sRNAs) and mRNAs to facilitate mRNA translational regulation in response to envelope stress, environmental stress and changes in metabolite concentrations. Also binds with high specificity to tRNAs. This is RNA-binding protein Hfq from Maricaulis maris (strain MCS10) (Caulobacter maris).